Here is a 221-residue protein sequence, read N- to C-terminus: Glutathione S-transferase (221 aa).

One can recognise a GST N-terminal domain in the interval 3-83 (GKPVLHYANT…YIAGKYNLYG (81 aa)). Residues tyrosine 9, lysine 45, 54-55 (QV), and 67-68 (QT) contribute to the glutathione site. Positions 85-208 (DLKERALIDM…QPGSQRKPRL (124 aa)) constitute a GST C-terminal domain.

It belongs to the GST superfamily. Alpha family. Homodimer or heterodimer of GSTA1 and GSTA2.

The catalysed reaction is RX + glutathione = an S-substituted glutathione + a halide anion + H(+). It carries out the reaction prostaglandin A2 + glutathione = prostaglandin A2-S-(R)-glutathione. It catalyses the reaction prostaglandin J2 + glutathione = prostaglandin J2-S-(R)-glutathione. The enzyme catalyses (13S)-hydroperoxy-(9Z,11E)-octadecadienoate + 2 glutathione = (13S)-hydroxy-(9Z,11E)-octadecadienoate + glutathione disulfide + H2O. The catalysed reaction is androst-5-ene-3,17-dione = androst-4-ene-3,17-dione. In terms of biological role, glutathione S-transferase that catalyzes the nucleophilic attack of the sulfur atom of glutathione on the electrophilic groups of a wide range of exogenous and endogenous compounds. Involved in the formation of glutathione conjugates of both prostaglandin A2 (PGA2) and prostaglandin J2 (PGJ2). It also catalyzes the isomerization of D5-androstene-3,17-dione (AD) into D4-androstene-3,17-dione and may therefore play an important role in hormone biosynthesis. Through its glutathione-dependent peroxidase activity toward the fatty acid hydroperoxide (13S)-hydroperoxy-(9Z,11E)-octadecadienoate/13-HPODE it is also involved in the metabolism of oxidized linoleic acid. The polypeptide is Glutathione S-transferase (Gallus gallus (Chicken)).